A 480-amino-acid chain; its full sequence is Probable GH family 25 lysozyme 3 (480 aa).

Residues 1–20 (MNKLILSILSVLLIVSIASA) form the signal peptide. One can recognise a Ch-type lysozyme domain in the interval 21-231 (GNGIDISSGT…STTSSSATSS (211 aa)). Active-site residues include D25, D114, and E116. Positions 219–472 (SGSSTTSSSA…SSGSGNYTSG (254 aa)) are enriched in low complexity. Residues 219–480 (SGSSTTSSSA…SGSGNGAFLF (262 aa)) are disordered. N423, N428, N437, N446, and N468 each carry an N-linked (GlcNAc...) asparagine glycan.

This sequence belongs to the glycosyl hydrolase 25 family.

The protein localises to the secreted. The catalysed reaction is Hydrolysis of (1-&gt;4)-beta-linkages between N-acetylmuramic acid and N-acetyl-D-glucosamine residues in a peptidoglycan and between N-acetyl-D-glucosamine residues in chitodextrins.. This Dictyostelium discoideum (Social amoeba) protein is Probable GH family 25 lysozyme 3.